The chain runs to 405 residues: L-carnitine CoA-transferase (405 aa).

CoA contacts are provided by Lys97 and Arg104. Catalysis depends on Asp169, which acts as the Nucleophile.

This sequence belongs to the CoA-transferase III family. CaiB subfamily. As to quaternary structure, homodimer.

The protein localises to the cytoplasm. It catalyses the reaction crotonobetainyl-CoA + (R)-carnitine = crotonobetaine + (R)-carnitinyl-CoA. The catalysed reaction is 4-(trimethylamino)butanoyl-CoA + (R)-carnitine = (R)-carnitinyl-CoA + 4-(trimethylamino)butanoate. The protein operates within amine and polyamine metabolism; carnitine metabolism. In terms of biological role, catalyzes the reversible transfer of the CoA moiety from gamma-butyrobetainyl-CoA to L-carnitine to generate L-carnitinyl-CoA and gamma-butyrobetaine. Is also able to catalyze the reversible transfer of the CoA moiety from gamma-butyrobetainyl-CoA or L-carnitinyl-CoA to crotonobetaine to generate crotonobetainyl-CoA. The protein is L-carnitine CoA-transferase of Escherichia coli (strain K12 / MC4100 / BW2952).